The primary structure comprises 1336 residues: Adhesion G protein-coupled receptor A2 (1336 aa).

The N-terminal stretch at 1-33 is a signal peptide; it reads MGAGGRRMPVPPARLLLLPLLPCLLLLAPGTRG. Over 34-769 the chain is Extracellular; sequence APGCPVPIRG…AGGSGAGLHP (736 aa). N84 and N101 each carry an N-linked (GlcNAc...) asparagine glycan. 4 LRR repeats span residues 85-106, 109-130, 133-154, and 157-178; these read GTIT…SFLG, LLEK…AFLG, ELKR…TFQG, and RLLR…VFDE. N-linked (GlcNAc...) asparagine glycosylation occurs at N162. One can recognise an LRRCT domain in the interval 190 to 241; sequence EFLTCDCRLRWLLPWARNHSLQLSERTLCAYPSALHAHALSSLQESQLRCEG. Positions 247 to 344 constitute an Ig-like domain; sequence THYLIPSLRQ…GNTSKKVEIV (98 aa). Cysteines 268 and 328 form a disulfide. A glycan (N-linked (GlcNAc...) asparagine) is linked at N275. The RGD motif lies at 362-364; sequence RGD. Residues 594 to 757 enclose the GAIN-B domain; that stretch reads FRCTTGRPNI…AVLMELNAFP (164 aa). 3 N-linked (GlcNAc...) asparagine glycosylation sites follow: N602, N691, and N735. The segment at 711-757 is GPS; that stretch reads AAWWNQDGPGGWSSEGCRLRYSQPNVSSLYCQHLGNVAVLMELNAFP. C727 and C741 form a disulfide bridge. Residues 770–790 traverse the membrane as a helical segment; that stretch reads VVYPCTALLLLCLFSTIITYI. The Cytoplasmic portion of the chain corresponds to 791–805; that stretch reads LNHSSIHVSRKGWHM. The helical transmembrane segment at 806-826 threads the bilayer; the sequence is LLNLCFHMAMTSAVFVGGVTL. Residues 827–830 lie on the Extracellular side of the membrane; sequence TNYQ. The helical transmembrane segment at 831–851 threads the bilayer; sequence MVCQAVGITLHYSSLSSLLWM. The Cytoplasmic portion of the chain corresponds to 852–884; sequence GVKARVLHKELSWRAPPLEEGEAAPPGPRPMLR. Residues 885–905 form a helical membrane-spanning segment; that stretch reads FYLIAGGIPLIICGITAAVNI. Residues 906-922 are Extracellular-facing; sequence HNYRDHSPYCWLVWRPS. The chain crosses the membrane as a helical span at residues 923 to 943; it reads LGAFYIPVALILPITWIYFLC. At 944–1016 the chain is on the cytoplasmic side; that stretch reads AGLHLRSHVA…DGVYSPGVQL (73 aa). The chain crosses the membrane as a helical span at residues 1017 to 1037; it reads GALMTTHFLYLAMWACGALAV. At 1038–1044 the chain is on the extracellular side; that stretch reads SQRWLPR. Residues 1045–1065 form a helical membrane-spanning segment; that stretch reads VVCSCLYGVAASALGLFVFTH. Topologically, residues 1066–1336 are cytoplasmic; it reads HCARRRDVRA…TGLWKSETTV (271 aa). Residues 1084–1095 show a composition bias toward low complexity; the sequence is ASPSASHVPARA. The segment at 1084-1310 is disordered; sequence ASPSASHVPA…NGAPKGGKYE (227 aa). S1104 is modified (phosphoserine). The segment covering 1110 to 1124 has biased composition (low complexity); the sequence is GPASLKSSPSGSSGR. Polar residues predominate over residues 1133–1143; that stretch reads TNLQVAQSQVC. The span at 1166–1186 shows a compositional bias: basic residues; it reads PRHHNNLHHGRRVHKSRAKGH. The span at 1213 to 1234 shows a compositional bias: polar residues; it reads SSESGSLHNSPSDSYPGSSRNS. The PDZ-binding motif lies at 1333–1336; it reads ETTV.

The protein belongs to the G-protein coupled receptor 2 family. Adhesion G-protein coupled receptor (ADGR) subfamily. As to quaternary structure, interacts with RECK; the interaction is direct. Interacts (via PDZ-binding motif) with DLG1 (via PDZ domains). The cleaved extracellular subunit interacts with the integrin heterodimer ITGAV:ITGB3. Glycosylated. In terms of processing, proteolytically cleaved into two subunits, an extracellular subunit and a seven-transmembrane subunit. Cleaved by thrombin (F2) and MMP1. Also cleaved by MMP9, with lower efficiency. Presence of the protein disulfide-isomerase P4HB at the cell surface is additionally required for shedding of the extracellular subunit, suggesting that the subunits are linked by disulfide bonds. Shedding is enhanced by the growth factor FGF2 and may promote cell survival during angiogenesis. In terms of tissue distribution, abundantly expressed in the vasculature of the developing embryo. Expression in normal adult tissues is specifically vascular with endothelial expression in CNS, including brain and retina and more widespread pericyte expression in the brain and organs, including the kidney, pancreas and corpus luteum.

It is found in the cell membrane. The protein resides in the cell projection. It localises to the filopodium. Endothelial receptor which functions together with RECK to enable brain endothelial cells to selectively respond to Wnt7 signals (WNT7A or WNT7B). Plays a key role in Wnt7-specific responses, such as endothelial cell sprouting and migration in the forebrain and neural tube, and establishment of the blood-brain barrier. Acts as a Wnt7-specific coactivator of canonical Wnt signaling: required to deliver RECK-bound Wnt7 to frizzled by assembling a higher-order RECK-ADGRA2-Fzd-LRP5-LRP6 complex. ADGRA2-tethering function does not rely on its G-protein coupled receptor (GPCR) structure but instead on its combined capacity to interact with RECK extracellularly and recruit the Dishevelled scaffolding protein intracellularly. Binds to the glycosaminoglycans heparin, heparin sulfate, chondroitin sulfate and dermatan sulfate. This chain is Adhesion G protein-coupled receptor A2, found in Mus musculus (Mouse).